A 291-amino-acid polypeptide reads, in one-letter code: Serine hydrolase BPHL (291 aa).

An N-terminal signal peptide occupies residues 1–37 (MVAVLGGRGVLRLRLLLSALKPGIHVPRAGPAAAFGT). Residues 62–181 (AVLLLPGMLG…DSMIYEGIRD (120 aa)) enclose the AB hydrolase-1 domain. N6-acetyllysine is present on residues Lys-86 and Lys-119. An N6-acetyllysine; alternate modification is found at Lys-126. Lys-126 bears the N6-succinyllysine; alternate mark. The active-site Nucleophile is the Ser-139. Lys-184 carries the N6-succinyllysine modification. Lys-191 carries the N6-acetyllysine; alternate modification. Lys-191 is modified (N6-succinyllysine; alternate). Lys-217 is subject to N6-acetyllysine. Mg(2+) is bound at residue Asp-221. Lys-243 is subject to N6-acetyllysine. The active-site Charge relay system is Asp-244. An N6-acetyllysine; alternate mark is found at Lys-260 and Lys-271. 2 positions are modified to N6-succinyllysine; alternate: Lys-260 and Lys-271. The Charge relay system role is filled by His-272.

This sequence belongs to the AB hydrolase superfamily. Lipase family. Monomer. May also form homodimers. Expressed at high levels in liver and kidney and lower levels in heart, intestine and skeletal muscle.

The protein localises to the mitochondrion. The catalysed reaction is L-homocysteine thiolactone + H2O = L-homocysteine + H(+). It catalyses the reaction valacyclovir + H2O = acyclovir + L-valine + H(+). Its function is as follows. Specific alpha-amino acid ester serine hydrolase that prefers small, hydrophobic, and aromatic side chains and does not have a stringent requirement for the leaving group other than preferring a primary alcohol. Has homocysteine-thiolactonase activity (in vitro) and may play a significant role in the detoxification of homocysteine thiolactone in vivo. Catalyzes the hydrolytic activation of amino acid ester prodrugs of nucleoside analogs such as valacyclovir and valganciclovir, converting them into their active forms (acyclovir and ganciclovir). This chain is Serine hydrolase BPHL (BPHL), found in Homo sapiens (Human).